Reading from the N-terminus, the 553-residue chain is Dihydroxy-acid dehydratase (553 aa).

Asp78 provides a ligand contact to Mg(2+). Cys119 contacts [2Fe-2S] cluster. Mg(2+)-binding residues include Asp120 and Lys121. Lys121 carries the post-translational modification N6-carboxylysine. Cys193 serves as a coordination point for [2Fe-2S] cluster. Glu441 contributes to the Mg(2+) binding site. Ser467 functions as the Proton acceptor in the catalytic mechanism.

This sequence belongs to the IlvD/Edd family. In terms of assembly, homodimer. The cofactor is [2Fe-2S] cluster. It depends on Mg(2+) as a cofactor.

The catalysed reaction is (2R)-2,3-dihydroxy-3-methylbutanoate = 3-methyl-2-oxobutanoate + H2O. It carries out the reaction (2R,3R)-2,3-dihydroxy-3-methylpentanoate = (S)-3-methyl-2-oxopentanoate + H2O. Its pathway is amino-acid biosynthesis; L-isoleucine biosynthesis; L-isoleucine from 2-oxobutanoate: step 3/4. The protein operates within amino-acid biosynthesis; L-valine biosynthesis; L-valine from pyruvate: step 3/4. Its function is as follows. Functions in the biosynthesis of branched-chain amino acids. Catalyzes the dehydration of (2R,3R)-2,3-dihydroxy-3-methylpentanoate (2,3-dihydroxy-3-methylvalerate) into 2-oxo-3-methylpentanoate (2-oxo-3-methylvalerate) and of (2R)-2,3-dihydroxy-3-methylbutanoate (2,3-dihydroxyisovalerate) into 2-oxo-3-methylbutanoate (2-oxoisovalerate), the penultimate precursor to L-isoleucine and L-valine, respectively. The chain is Dihydroxy-acid dehydratase from Geobacter sulfurreducens (strain ATCC 51573 / DSM 12127 / PCA).